A 476-amino-acid chain; its full sequence is Bifunctional protein HldE (476 aa).

Positions 1-318 (MFQYSAEFKQ…ENAIHGRSNT (318 aa)) are ribokinase. Residue 195 to 198 (NMSE) coordinates ATP. D264 is an active-site residue. The interval 344-476 (MTNGCFDILH…VISKIQQLKD (133 aa)) is cytidylyltransferase.

The protein in the N-terminal section; belongs to the carbohydrate kinase PfkB family. In the C-terminal section; belongs to the cytidylyltransferase family. In terms of assembly, homodimer.

It catalyses the reaction D-glycero-beta-D-manno-heptose 7-phosphate + ATP = D-glycero-beta-D-manno-heptose 1,7-bisphosphate + ADP + H(+). The enzyme catalyses D-glycero-beta-D-manno-heptose 1-phosphate + ATP + H(+) = ADP-D-glycero-beta-D-manno-heptose + diphosphate. It participates in nucleotide-sugar biosynthesis; ADP-L-glycero-beta-D-manno-heptose biosynthesis; ADP-L-glycero-beta-D-manno-heptose from D-glycero-beta-D-manno-heptose 7-phosphate: step 1/4. It functions in the pathway nucleotide-sugar biosynthesis; ADP-L-glycero-beta-D-manno-heptose biosynthesis; ADP-L-glycero-beta-D-manno-heptose from D-glycero-beta-D-manno-heptose 7-phosphate: step 3/4. Its pathway is bacterial outer membrane biogenesis; LPS core biosynthesis. Catalyzes the phosphorylation of D-glycero-D-manno-heptose 7-phosphate at the C-1 position to selectively form D-glycero-beta-D-manno-heptose-1,7-bisphosphate. Functionally, catalyzes the ADP transfer from ATP to D-glycero-beta-D-manno-heptose 1-phosphate, yielding ADP-D-glycero-beta-D-manno-heptose. The sequence is that of Bifunctional protein HldE from Pasteurella multocida (strain Pm70).